Consider the following 541-residue polypeptide: NADH-ubiquinone oxidoreductase chain 5 (541 aa).

A run of 16 helical transmembrane segments spans residues 17–37 (LLIF…LFAF), 48–70 (TIIH…YYMM), 74–94 (FVNR…LLIM), 98–118 (GLSL…LIMF), 130–150 (ITIL…GLMF), 157–177 (YMFL…SSFT), 191–213 (AMAA…AGIY), 226–246 (GCFL…LAAF), 263–283 (LGVM…FHLF), 285–305 (HALF…SLGV), 322–342 (SYII…SGFF), 353–373 (SLCM…TSTY), 404–424 (LFVL…MFSG), 429–449 (IILG…GVIL), 455–475 (SFSL…FITG), and 518–538 (FLTS…TLFM).

Belongs to the complex I subunit 5 family.

Its subcellular location is the mitochondrion inner membrane. The catalysed reaction is a ubiquinone + NADH + 5 H(+)(in) = a ubiquinol + NAD(+) + 4 H(+)(out). Core subunit of the mitochondrial membrane respiratory chain NADH dehydrogenase (Complex I) that is believed to belong to the minimal assembly required for catalysis. Complex I functions in the transfer of electrons from NADH to the respiratory chain. The immediate electron acceptor for the enzyme is believed to be ubiquinone. In Artemia franciscana (Brine shrimp), this protein is NADH-ubiquinone oxidoreductase chain 5 (ND5).